A 158-amino-acid chain; its full sequence is Crossover junction endodeoxyribonuclease RuvC (158 aa).

Catalysis depends on residues Asp-7, Glu-66, and Asp-139. Mg(2+) contacts are provided by Asp-7, Glu-66, and Asp-139.

Belongs to the RuvC family. Homodimer which binds Holliday junction (HJ) DNA. The HJ becomes 2-fold symmetrical on binding to RuvC with unstacked arms; it has a different conformation from HJ DNA in complex with RuvA. In the full resolvosome a probable DNA-RuvA(4)-RuvB(12)-RuvC(2) complex forms which resolves the HJ. Mg(2+) is required as a cofactor.

It localises to the cytoplasm. It catalyses the reaction Endonucleolytic cleavage at a junction such as a reciprocal single-stranded crossover between two homologous DNA duplexes (Holliday junction).. Functionally, the RuvA-RuvB-RuvC complex processes Holliday junction (HJ) DNA during genetic recombination and DNA repair. Endonuclease that resolves HJ intermediates. Cleaves cruciform DNA by making single-stranded nicks across the HJ at symmetrical positions within the homologous arms, yielding a 5'-phosphate and a 3'-hydroxyl group; requires a central core of homology in the junction. The consensus cleavage sequence is 5'-(A/T)TT(C/G)-3'. Cleavage occurs on the 3'-side of the TT dinucleotide at the point of strand exchange. HJ branch migration catalyzed by RuvA-RuvB allows RuvC to scan DNA until it finds its consensus sequence, where it cleaves and resolves the cruciform DNA. The sequence is that of Crossover junction endodeoxyribonuclease RuvC from Nitratiruptor sp. (strain SB155-2).